The following is a 320-amino-acid chain: 3-O-acetylpapaveroxine carboxylesterase CXE1 (320 aa).

The Involved in the stabilization of the negatively charged intermediate by the formation of the oxyanion hole signature appears at 72–74 (HGG). Residues serine 158, aspartate 262, and histidine 292 contribute to the active site.

It belongs to the 'GDXG' lipolytic enzyme family.

The catalysed reaction is 3-O-acetylpapaveroxine + H2O = narcotine hemiacetal + acetate + H(+). The protein operates within alkaloid biosynthesis. Carboxylesterase involved in the biosynthesis of the benzylisoquinoline alkaloid noscapine. Converts 3-O-acetylpapaveroxine to papaveroxine which spontaneously rearranges to narcotine hemiacetal. The polypeptide is 3-O-acetylpapaveroxine carboxylesterase CXE1 (Papaver somniferum (Opium poppy)).